Consider the following 347-residue polypeptide: MVSVKPLKFEDDELLLLDQRKLPGKEEYFTCKTYQDVHFAIKEMVCRGAPLIGAVGAYGVALACREFINESQEKFQQETKRAISELSSARPTAVNLFWALNKMNKLLGQVMEENTAPEDIYPIILNEAHKISDQELQRNYRIAEFGDQVISNGDKILTHCNTGALATTGYGTALGVIRQAHYNHKDIFVYVDETRPRLQGAKLTAWELKQEQLPFALIPDSSAAVLIKNGDIDVIFVGADRIASNGDTANKIGTFMLSILAKKYKVPFYVVAPVSTIDFQAKNGDDITIEERSSKEVTEIDGVRVAPTDIQVYNPAFDITPAENITGIITEKGIIGPNNREIMTIQE.

Substrate contacts are provided by residues 47 to 49 (RGA), R90, and Q199. Residue D240 is the Proton donor of the active site. Substrate is bound at residue 250–251 (NK).

Belongs to the eIF-2B alpha/beta/delta subunits family. MtnA subfamily.

It carries out the reaction 5-(methylsulfanyl)-alpha-D-ribose 1-phosphate = 5-(methylsulfanyl)-D-ribulose 1-phosphate. It functions in the pathway amino-acid biosynthesis; L-methionine biosynthesis via salvage pathway; L-methionine from S-methyl-5-thio-alpha-D-ribose 1-phosphate: step 1/6. Its function is as follows. Catalyzes the interconversion of methylthioribose-1-phosphate (MTR-1-P) into methylthioribulose-1-phosphate (MTRu-1-P). The protein is Methylthioribose-1-phosphate isomerase of Natranaerobius thermophilus (strain ATCC BAA-1301 / DSM 18059 / JW/NM-WN-LF).